A 785-amino-acid chain; its full sequence is Endonuclease MutS2 (785 aa).

ATP is bound at residue 331-338 (GPNTGGKT). The Smr domain occupies 710 to 785 (LDLRGLYADE…GLGVTVVELA (76 aa)).

It belongs to the DNA mismatch repair MutS family. MutS2 subfamily. Homodimer. Binds to stalled ribosomes, contacting rRNA.

In terms of biological role, endonuclease that is involved in the suppression of homologous recombination and thus may have a key role in the control of bacterial genetic diversity. Functionally, acts as a ribosome collision sensor, splitting the ribosome into its 2 subunits. Detects stalled/collided 70S ribosomes which it binds and splits by an ATP-hydrolysis driven conformational change. Acts upstream of the ribosome quality control system (RQC), a ribosome-associated complex that mediates the extraction of incompletely synthesized nascent chains from stalled ribosomes and their subsequent degradation. Probably generates substrates for RQC. This is Endonuclease MutS2 from Pelotomaculum thermopropionicum (strain DSM 13744 / JCM 10971 / SI).